Reading from the N-terminus, the 623-residue chain is V-type proton ATPase catalytic subunit A (623 aa).

ATP is bound at residue 252-259 (GAFGCGKT).

It belongs to the ATPase alpha/beta chains family. V-ATPase is a heteromultimeric enzyme composed of a peripheral catalytic V1 complex (main components: subunits A, B, C, D, E, and F) attached to an integral membrane V0 proton pore complex (main component: the proteolipid protein).

The enzyme catalyses ATP + H2O + 4 H(+)(in) = ADP + phosphate + 5 H(+)(out). In terms of biological role, catalytic subunit of the peripheral V1 complex of vacuolar ATPase. V-ATPase vacuolar ATPase is responsible for acidifying a variety of intracellular compartments in eukaryotic cells. This Citrus unshiu (Satsuma mandarin) protein is V-type proton ATPase catalytic subunit A.